The primary structure comprises 172 residues: Ribosome maturation factor RimM (172 aa).

The region spanning 95-168 (QEGEFYYHQI…CVDVELMEGL (74 aa)) is the PRC barrel domain.

This sequence belongs to the RimM family. As to quaternary structure, binds ribosomal protein uS19.

It is found in the cytoplasm. Its function is as follows. An accessory protein needed during the final step in the assembly of 30S ribosomal subunit, possibly for assembly of the head region. Essential for efficient processing of 16S rRNA. May be needed both before and after RbfA during the maturation of 16S rRNA. It has affinity for free ribosomal 30S subunits but not for 70S ribosomes. The chain is Ribosome maturation factor RimM from Streptococcus pyogenes serotype M49 (strain NZ131).